The following is a 405-amino-acid chain: Argininosuccinate synthase (405 aa).

Position 12–20 (Ala12–Ser20) interacts with ATP. Residues Tyr92 and Ser97 each contribute to the L-citrulline site. Gly122 is an ATP binding site. Thr124, Asn128, and Asp129 together coordinate L-aspartate. Asn128 contacts L-citrulline. Arg132, Ser181, Ser190, Glu266, and Tyr278 together coordinate L-citrulline.

The protein belongs to the argininosuccinate synthase family. Type 1 subfamily. Homotetramer.

Its subcellular location is the cytoplasm. It carries out the reaction L-citrulline + L-aspartate + ATP = 2-(N(omega)-L-arginino)succinate + AMP + diphosphate + H(+). It functions in the pathway amino-acid biosynthesis; L-arginine biosynthesis; L-arginine from L-ornithine and carbamoyl phosphate: step 2/3. This Cronobacter sakazakii (strain ATCC BAA-894) (Enterobacter sakazakii) protein is Argininosuccinate synthase.